The primary structure comprises 461 residues: GTPase Era, mitochondrial (461 aa).

Residues 1-35 (MAAPWLQRWRGAYAGPSGPLRLVRLHGVQRSSWRA) constitute a mitochondrion transit peptide. Positions 39–73 (AAGAFGAGPHPGPPQRAANPGPGPHPPPVATSREK) are disordered. One can recognise an Era-type G domain in the interval 89 to 354 (KVLRISIIGA…QYLLMQAKPG (266 aa)). Residues 97 to 104 (GAPNSGKS) are G1. 97-104 (GAPNSGKS) provides a ligand contact to GTP. A G2 region spans residues 123 to 127 (HTTRC). The tract at residues 144–147 (DTPG) is G3. Residues 144–148 (DTPGL) and 213–216 (NKVD) each bind GTP. Positions 213 to 216 (NKVD) are G4. The segment at 260-319 (KVTQTPPPENRARESPCQLETDKAQEGSSLDNSSDVKASESSLDTEAREQKPYKYGDQKN) is disordered. The segment covering 269–284 (NRARESPCQLETDKAQ) has biased composition (basic and acidic residues). Positions 285 to 303 (EGSSLDNSSDVKASESSLD) are enriched in polar residues. Positions 304–319 (TEAREQKPYKYGDQKN) are enriched in basic and acidic residues. The G5 stretch occupies residues 332-334 (LAA). A KH type-2 domain is found at 380 to 461 (ILEYLPLEVP…RLKLKVEVKS (82 aa)).

Belongs to the TRAFAC class TrmE-Era-EngA-EngB-Septin-like GTPase superfamily. Era GTPase family.

Its subcellular location is the mitochondrion matrix. It is found in the mitochondrion inner membrane. In terms of biological role, probable GTPase that plays a role in the mitochondrial ribosomal small subunit assembly. Specifically binds the 12S mitochondrial rRNA (12S mt-rRNA) to a 33 nucleotide section delineating the 3' terminal stem-loop region. May act as a chaperone that protects the 12S mt-rRNA on the 28S mitoribosomal subunit during ribosomal small subunit assembly. In Gallus gallus (Chicken), this protein is GTPase Era, mitochondrial (ERAL1).